Here is a 753-residue protein sequence, read N- to C-terminus: Probable TonB-dependent siderophore receptor PiuA (753 aa).

The N-terminal stretch at 1–35 (MSRQSTDTAVSSQRLLASAIGVAITAIAAPQAAQA) is a signal peptide. Positions 79–185 (PLLDTPKTVT…TGGSLNLISK (107 aa)) constitute a TBDR plug domain. One can recognise a TBDR beta-barrel domain in the interval 190–753 (DNFTDAGFTW…TALLGVNFHF (564 aa)). Residues C420 and C430 are joined by a disulfide bond.

The protein belongs to the TonB-dependent receptor family.

It localises to the cell outer membrane. In terms of biological role, involved in the initial step of iron uptake by binding iron chelating siderophores, thereby allowing extraction of iron from the environment. Probably involved in the transport of siderophores, including host catecholamines such as dopamine. The chain is Probable TonB-dependent siderophore receptor PiuA from Pseudomonas aeruginosa (strain ATCC 15692 / DSM 22644 / CIP 104116 / JCM 14847 / LMG 12228 / 1C / PRS 101 / PAO1).